Consider the following 628-residue polypeptide: MALSFSRDRSRALPLAAEIGALGVVFGDIGTSPLYALKQGVLAVGGTDFTSADVMGLLSLITWSIILSVTVKYVMLVLRADNDGEGGILALVTLLDLHRSAIGLRWYLLAAGLVGAAMLIGDGVLTPAMSVLSAIEGLQVISPALLDWIVPLTVLVLAAVFLSQRLGTERIASFYGPIMVLWFGSLAVLGVYGIMQAPEVLAGLDPRAGFHTVTTHPGLAGVIIGACFLAITGGEALYADLGHFGRKTIARAWLFVAMPALLLNYFGQGAILLRDPQAVRNPFYDLCPDLFDIPLLFLATAATVIASQSIITGVFSLAKQAIELGYLPPMRIRYTSEHNEQHIYVGRLNWLLMVACIAVVLGFEASDRLASAYGIAVAFAMVTTSILFVAQVNRAWKWPKPAVIALGIGLFSLDAAFASANLTKLHEGGWLPLTIAGIVIFVMVSWRRGLEGVVAQQQRFTEPLDEFVLRGDRASDAESPRTAIFLSRAGAMTPVALSRMADLLKVRFQRAVIVSVWIAARPRVSVDDRVRVTNLDGGFIRVDLRFGYMQQIDVPSVLGPALSARGVDPDEAIYVIGHERIIPPDEVVRGRDVVAHVFAFLARNAERSVDRFGLPRSRTVEIGYPVKL.

12 helical membrane-spanning segments follow: residues 12-32 (ALPL…IGTS), 57-77 (LLSL…VMLV), 106-126 (WYLL…GVLT), 141-161 (ISPA…AAVF), 174-194 (FYGP…VYGI), 219-239 (LAGV…ALYA), 253-273 (WLFV…AILL), 295-315 (LLFL…TGVF), 343-363 (IYVG…VLGF), 369-389 (LASA…ILFV), 402-422 (AVIA…SANL), and 425-445 (LHEG…VMVS).

This sequence belongs to the HAK/KUP transporter (TC 2.A.72) family.

The protein resides in the cell inner membrane. It catalyses the reaction K(+)(in) + H(+)(in) = K(+)(out) + H(+)(out). Transport of potassium into the cell. Likely operates as a K(+):H(+) symporter. This chain is Probable potassium transport system protein Kup, found in Azorhizobium caulinodans (strain ATCC 43989 / DSM 5975 / JCM 20966 / LMG 6465 / NBRC 14845 / NCIMB 13405 / ORS 571).